The following is a 136-amino-acid chain: Transcription antitermination protein NusB (136 aa).

This sequence belongs to the NusB family.

In terms of biological role, involved in transcription antitermination. Required for transcription of ribosomal RNA (rRNA) genes. Binds specifically to the boxA antiterminator sequence of the ribosomal RNA (rrn) operons. In Arthrobacter sp. (strain FB24), this protein is Transcription antitermination protein NusB.